Consider the following 396-residue polypeptide: Cytochrome P450 121 (396 aa).

Position 345 (Cys-345) interacts with heme.

This sequence belongs to the cytochrome P450 family. It depends on heme as a cofactor.

It localises to the cytoplasm. This Mycobacterium bovis (strain ATCC BAA-935 / AF2122/97) protein is Cytochrome P450 121 (cyp121).